Reading from the N-terminus, the 382-residue chain is Gap junction alpha-1 protein (382 aa).

At 2 to 23 the chain is on the cytoplasmic side; it reads GGWSALAKLLGKVQAYSPAGGK. Position 5 is a phosphoserine (Ser-5). The helical transmembrane segment at 24 to 44 threads the bilayer; it reads VWLSVLFIFRILLLGTAVESA. Residues 45–76 lie on the Extracellular side of the membrane; the sequence is WGDEQSAFRCNTQQPGCENVCYDKSFPISHVR. Intrachain disulfides connect Cys-54-Cys-192 and Cys-187-Cys-198. A helical membrane pass occupies residues 77-97; the sequence is FWVLQIIFVSVPTLLYLAHVF. Residues 98–155 lie on the Cytoplasmic side of the membrane; sequence YVMRKEEKLNKKEEELKVAQTDGANVDMHLKQIEIKKFKYGIEEHGKVKMRGGLLRTY. A Glycyl lysine isopeptide (Lys-Gly) (interchain with G-Cter in SUMO) cross-link involves residue Lys-144. A helical transmembrane segment spans residues 156-176; sequence IISILFKSVFEVAFLLIQWYI. Topologically, residues 177-207 are extracellular; it reads YGFSLSAVYTCKREPCPHQVDCFLSRPTEKT. Residues 208 to 228 form a helical membrane-spanning segment; that stretch reads IFIIFMLVVSLVSLALNIIEL. At 229 to 382 the chain is on the cytoplasmic side; that stretch reads FYVFFKGVKD…SRPRPDDLEI (154 aa). A Glycyl lysine isopeptide (Lys-Gly) (interchain with G-Cter in SUMO) cross-link involves residue Lys-237. The interval 244 to 382 is interaction with NOV; it reads SDPYHATTGP…SRPRPDDLEI (139 aa). Phosphotyrosine is present on Tyr-247. Ser-255, Ser-257, and Ser-262 each carry phosphoserine. The segment at 264–382 is interaction with UBQLN4; the sequence is EYAYFNGCSS…SRPRPDDLEI (119 aa). Cys-271 carries the S-nitrosocysteine modification. Thr-275 is modified (phosphothreonine). Ser-306 and Ser-314 each carry phosphoserine. A compositionally biased stretch (polar residues) spans 317 to 332; the sequence is QNRMGQAGSTISNSHA. Positions 317-382 are disordered; sequence QNRMGQAGST…SRPRPDDLEI (66 aa). Ser-325 is modified (phosphoserine; by CK1). Residue Thr-326 is modified to Phosphothreonine. A phosphoserine; by CK1 mark is found at Ser-328 and Ser-330. Phosphoserine occurs at positions 344 and 365. Residues 362–374 show a composition bias toward low complexity; the sequence is RPSSRASSRASSR. Ser-368 bears the Phosphoserine; by PKC/PRKCG and PKC/PRKCD mark. Residues Ser-369 and Ser-373 each carry the phosphoserine modification.

Belongs to the connexin family. Alpha-type (group II) subfamily. In terms of assembly, a connexon is composed of a hexamer of connexins. Interacts with SGSM3. Interacts with RIC1/CIP150. Interacts with CNST and CSNK1D. Interacts (via C-terminus) with TJP1. Interacts (via C-terminus) with SRC (via SH3 domain). Interacts (not ubiquitinated) with UBQLN4 (via UBA domain). Interacts with NOV. Interacts with TMEM65. Interacts with ANK3/ANKG and PKP2. In terms of processing, phosphorylation at Ser-325, Ser-328 and Ser-330 by CK1 modulates gap junction assembly. Phosphorylated at Ser-368 by PRKCG; phosphorylation induces disassembly of gap junction plaques and inhibition of gap junction activity. Phosphorylation at Ser-368 by PRKCD triggers its internalization into small vesicles leading to proteasome-mediated degradation. Post-translationally, sumoylated with SUMO1, SUMO2 and SUMO3, which may regulate the level of functional Cx43 gap junctions at the plasma membrane. May be desumoylated by SENP1 or SENP2. S-nitrosylation at Cys-271 is enriched at the muscle endothelial gap junction in arteries, it augments channel permeability and may regulate of smooth muscle cell to endothelial cell communication. In terms of processing, acetylated in the developing cortex; leading to delocalization from the cell membrane.

It is found in the cell membrane. The protein resides in the cell junction. Its subcellular location is the gap junction. It localises to the endoplasmic reticulum. Gap junction protein that acts as a regulator of bladder capacity. A gap junction consists of a cluster of closely packed pairs of transmembrane channels, the connexons, through which materials of low MW diffuse from one cell to a neighboring cell. May play a critical role in the physiology of hearing by participating in the recycling of potassium to the cochlear endolymph. Negative regulator of bladder functional capacity: acts by enhancing intercellular electrical and chemical transmission, thus sensitizing bladder muscles to cholinergic neural stimuli and causing them to contract. May play a role in cell growth inhibition through the regulation of NOV expression and localization. Plays an essential role in gap junction communication in the ventricles. The polypeptide is Gap junction alpha-1 protein (GJA1) (Canis lupus familiaris (Dog)).